A 1275-amino-acid chain; its full sequence is Serine/threonine-protein kinase ULK4 (1275 aa).

The 277-residue stretch at 4–280 folds into the Protein kinase domain; sequence FILYEEIGRG…WTRLLQHSFW (277 aa). 2 disordered regions span residues 299–350 and 364–392; these read SRNT…KSTL and RPTP…TSPL. A compositionally biased stretch (basic and acidic residues) spans 336–348; sequence FRLENPTEFRPKS. Positions 364–373 are enriched in polar residues; it reads RPTPRTSTAV. HEAT repeat units lie at residues 842–880, 926–964, 1025–1063, 1151–1189, and 1213–1253; these read LKLC…ILSH, STVV…LLVN, LVEE…NLVA, NRPL…LYGG, and PKEQ…LAPG.

Belongs to the protein kinase superfamily. Ser/Thr protein kinase family. APG1/unc-51/ULK1 subfamily. Expressed in the brain, mainly in postmitotic neurons, including GABAergic neurons, but not in astrocytes (at protein level).

It catalyses the reaction L-seryl-[protein] + ATP = O-phospho-L-seryl-[protein] + ADP + H(+). It carries out the reaction L-threonyl-[protein] + ATP = O-phospho-L-threonyl-[protein] + ADP + H(+). Its function is as follows. May be involved in the remodeling of cytoskeletal components, such as alpha-tubulin, and in this way regulates neurite branching and elongation, as well as cell motility. The chain is Serine/threonine-protein kinase ULK4 (ULK4) from Homo sapiens (Human).